The following is a 190-amino-acid chain: Surfactant protein C (190 aa).

Positions 1 to 24 (MDVGSKEVLMESPPDYTAVPGGRL) are excised as a propeptide. Residues C28 and C29 are each lipidated (S-palmitoyl cysteine). Positions 59–190 (HMSQKHTEMV…LCGEVPLYYT (132 aa)) are excised as a propeptide. Residues 94 to 190 (FSIGSTGTVV…LCGEVPLYYT (97 aa)) form the BRICHOS domain. A disulfide bridge links C121 with C182.

It localises to the secreted. The protein resides in the extracellular space. Its subcellular location is the surface film. Functionally, pulmonary surfactant associated proteins promote alveolar stability by lowering the surface tension at the air-liquid interface in the peripheral air spaces. This is Surfactant protein C (SFTPC) from Bos taurus (Bovine).